The primary structure comprises 595 residues: Torsin-1A-interacting protein 1 (595 aa).

Residues 1-221 (MAGERWQAEG…GNTKTNEREA (221 aa)) are disordered. Over 1 to 351 (MAGERWQAEG…NEPSVKIKWW (351 aa)) the chain is Nuclear. The span at 24–38 (PIREGRRRLDPRNGD) shows a compositional bias: basic and acidic residues. A Phosphoserine modification is found at serine 60. 2 stretches are compositionally biased toward basic and acidic residues: residues 70–101 (FEPR…EVRE) and 115–132 (RAQE…RLEQ). Polar residues predominate over residues 133 to 143 (HSQQPQLSPAT). Phosphoserine is present on residues serine 134, serine 140, serine 151, serine 153, serine 154, and serine 155. Polar residues predominate over residues 204 to 215 (LDSTYQTNGNTK). A Phosphothreonine modification is found at threonine 235. Phosphoserine is present on residues serine 241, serine 244, and serine 255. 2 disordered regions span residues 250-286 (ARSS…PAHE) and 319-340 (IQKS…AIHH). The span at 251-262 (RSSDSLESRDEA) shows a compositional bias: basic and acidic residues. A compositionally biased stretch (polar residues) spans 319–335 (IQKSNFGNQSPSTSRPQ). Residue lysine 321 forms a Glycyl lysine isopeptide (Lys-Gly) (interchain with G-Cter in SUMO2) linkage. Serine 328 carries the phosphoserine modification. Residues 352–372 (LLGLVAILAVGLFWFFHTPAV) traverse the membrane as a helical segment. Positions 368-595 (HTPAVETTAV…ENTLKAGSCL (228 aa)) are interaction with TOR1A. Positions 373–400 (ETTAVQEFQNQMKQLQSKYQSQNEKLWK) form a coiled coil. Over 373–595 (ETTAVQEFQN…ENTLKAGSCL (223 aa)) the chain is Perinuclear space. Asparagine 411 is a glycosylation site (N-linked (GlcNAc...) asparagine).

Belongs to the TOR1AIP family. Interacts with ATP1B4. Interacts with TOR1A (ATP-bound). Interacts with TOR1B, TOR2A and TOR3A. Interacts with VIM. As to expression, expressed in the spinal cord and liver (at protein level).

The protein localises to the nucleus inner membrane. In terms of biological role, required for nuclear membrane integrity. Induces TOR1A and TOR1B ATPase activity and is required for their location on the nuclear membrane. Binds to A- and B-type lamins. Possible role in membrane attachment and assembly of the nuclear lamina. The protein is Torsin-1A-interacting protein 1 (Tor1aip1) of Mus musculus (Mouse).